A 366-amino-acid chain; its full sequence is Chorismate synthase (366 aa).

The NADP(+) site is built by Arg-48 and Arg-54. FMN contacts are provided by residues 125-127, 238-239, Gly-278, 293-297, and Arg-319; these read RSS, NA, and KPTSS.

Belongs to the chorismate synthase family. In terms of assembly, homotetramer. Requires FMNH2 as cofactor.

It catalyses the reaction 5-O-(1-carboxyvinyl)-3-phosphoshikimate = chorismate + phosphate. It participates in metabolic intermediate biosynthesis; chorismate biosynthesis; chorismate from D-erythrose 4-phosphate and phosphoenolpyruvate: step 7/7. Functionally, catalyzes the anti-1,4-elimination of the C-3 phosphate and the C-6 proR hydrogen from 5-enolpyruvylshikimate-3-phosphate (EPSP) to yield chorismate, which is the branch point compound that serves as the starting substrate for the three terminal pathways of aromatic amino acid biosynthesis. This reaction introduces a second double bond into the aromatic ring system. In Burkholderia orbicola (strain MC0-3), this protein is Chorismate synthase.